The following is a 105-amino-acid chain: UPF0235 protein RP839 (105 aa).

Belongs to the UPF0235 family.

The polypeptide is UPF0235 protein RP839 (Rickettsia prowazekii (strain Madrid E)).